A 259-amino-acid polypeptide reads, in one-letter code: Putative zinc metalloprotease Rip2 (259 aa).

2 helical membrane passes run 14-34 (PIFL…WIAA) and 39-59 (PLSY…SLCL). His-60 is a Zn(2+) binding site. Glu-61 is a catalytic residue. His-64 serves as a coordination point for Zn(2+). 4 helical membrane-spanning segments follow: residues 96–116 (LGLP…GAVY), 129–149 (IVSL…LGLT), 159–179 (VFWS…VLNL), and 203–223 (LAPA…TPAL).

Belongs to the peptidase M50B family. Zn(2+) is required as a cofactor.

The protein localises to the cell membrane. This is Putative zinc metalloprotease Rip2 (rip2) from Mycolicibacterium smegmatis (strain ATCC 700084 / mc(2)155) (Mycobacterium smegmatis).